The chain runs to 425 residues: Serine--tRNA ligase (425 aa).

230–232 (TSE) lines the L-serine pocket. ATP-binding positions include 261–263 (RRE) and Val277. An L-serine-binding site is contributed by Glu284. 348-351 (ELTS) is an ATP binding site. Thr382 serves as a coordination point for L-serine.

Belongs to the class-II aminoacyl-tRNA synthetase family. Type-1 seryl-tRNA synthetase subfamily. In terms of assembly, homodimer. The tRNA molecule binds across the dimer.

Its subcellular location is the cytoplasm. The catalysed reaction is tRNA(Ser) + L-serine + ATP = L-seryl-tRNA(Ser) + AMP + diphosphate + H(+). It catalyses the reaction tRNA(Sec) + L-serine + ATP = L-seryl-tRNA(Sec) + AMP + diphosphate + H(+). It functions in the pathway aminoacyl-tRNA biosynthesis; selenocysteinyl-tRNA(Sec) biosynthesis; L-seryl-tRNA(Sec) from L-serine and tRNA(Sec): step 1/1. Its function is as follows. Catalyzes the attachment of serine to tRNA(Ser). Is also able to aminoacylate tRNA(Sec) with serine, to form the misacylated tRNA L-seryl-tRNA(Sec), which will be further converted into selenocysteinyl-tRNA(Sec). The protein is Serine--tRNA ligase of Streptomyces coelicolor (strain ATCC BAA-471 / A3(2) / M145).